Consider the following 581-residue polypeptide: Protein SPT2 homolog (581 aa).

The segment covering 26-35 has biased composition (low complexity); it reads YYSTKYSPPK. Disordered regions lie at residues 26–50 and 145–495; these read YYSTKYSPPKKQSKESKQLSSNIQK and QEDK…EYDS. Positions 36–76 form a coiled coil; it reads KQSKESKQLSSNIQKFLQKKEAEEAEKKRLERQKLNDLLAK. Positions 162 to 181 are enriched in basic and acidic residues; sequence SGTKERVKAAITREREEAKG. Composition is skewed to polar residues over residues 182-197 and 204-213; these read NTRQKSSTSTLPSSAT and VARSYSTSKT. 2 stretches are compositionally biased toward basic and acidic residues: residues 218-236 and 256-312; these read NAEKLEEERKKRQEEEQRR and LAEK…KETP. Residues 276–307 adopt a coiled-coil conformation; the sequence is ERLLSAREKRELEERQRQQEQRAQRLKMRESE. Over residues 352–376 the composition is skewed to low complexity; the sequence is SSASSTSLSSSNSHSSASRSSVSSS. The segment covering 447 to 461 has biased composition (polar residues); the sequence is TRQTPSSDVQRSQGG. Acidic residues predominate over residues 486 to 495; it reads DDDDEDEYDS.

Belongs to the SPT2 family.

The polypeptide is Protein SPT2 homolog (Drosophila melanogaster (Fruit fly)).